Reading from the N-terminus, the 325-residue chain is H-2 class I histocompatibility antigen, Q10 alpha chain (325 aa).

An N-terminal signal peptide occupies residues 1–24 (MGAMAPRTLLLLLAAALAPTQTQA). An alpha-1 region spans residues 25 to 114 (GSHSMRYFET…LLGYYNQSES (90 aa)). At 25–310 (GSHSMRYFET…PPSTDSIMSH (286 aa)) the chain is on the extracellular side. A glycan (N-linked (GlcNAc...) asparagine) is linked at asparagine 110. Positions 115–206 (GSHTIQWMYG…ELGKETLLRT (92 aa)) are alpha-2. 2 cysteine pairs are disulfide-bonded: cysteine 125/cysteine 188 and cysteine 227/cysteine 283. The interval 207–298 (DPPKTHVTHH…GLPEPLTLRW (92 aa)) is alpha-3. One can recognise an Ig-like C1-type domain in the interval 209–297 (PKTHVTHHPG…EGLPEPLTLR (89 aa)). An N-linked (GlcNAc...) asparagine glycan is attached at asparagine 280. The connecting peptide stretch occupies residues 299 to 310 (EPPPSTDSIMSH). Residues 311 to 324 (IADLLWPSLKLWWY) traverse the membrane as a helical segment.

The protein belongs to the MHC class I family. In terms of assembly, heterodimer of an alpha chain and a beta chain (beta-2-microglobulin).

The protein localises to the membrane. In terms of biological role, involved in the presentation of foreign antigens to the immune system. The polypeptide is H-2 class I histocompatibility antigen, Q10 alpha chain (H2-Q10) (Mus musculus (Mouse)).